Consider the following 122-residue polypeptide: Large ribosomal subunit protein uL14c (122 aa).

Belongs to the universal ribosomal protein uL14 family. In terms of assembly, part of the 50S ribosomal subunit.

The protein resides in the plastid. The protein localises to the chloroplast. Binds to 23S rRNA. The sequence is that of Large ribosomal subunit protein uL14c from Porphyra purpurea (Red seaweed).